The following is a 337-amino-acid chain: G-protein coupled receptor 26 (337 aa).

The Extracellular segment spans residues 1–10 (MNSWDAGLAG). Residues 11–31 (LLVGTIGVSLLSNGLVLLCLL) traverse the membrane as a helical segment. Residues 32–47 (HSADIRRQAPALFTLN) lie on the Cytoplasmic side of the membrane. Residues 48-68 (LTCGNLLCTVVNMPLTLAGVV) form a helical membrane-spanning segment. Topologically, residues 69–81 (AQRQPAGDRLCRL) are extracellular. Cys79 and Cys156 are disulfide-bonded. A helical membrane pass occupies residues 82–102 (AAFLDTFLAANSMLSMAALSI). Residues 103-123 (DRWVAVVFPLSYRAKMRLRDA) are Cytoplasmic-facing. The chain crosses the membrane as a helical span at residues 124–144 (AFMVAYTWLHALTFPATALAL). Residues 145 to 168 (SWLGFHQLYASCTLCSRRPDERLR) lie on the Extracellular side of the membrane. A helical membrane pass occupies residues 169-189 (FAVFTSAFHALSFLLSFIVLC). Residues 190–245 (FTYLKVLKVARFHCKRIDVITMQTLVLLVDIHPSVRERCLEEQKRRRQRATKKIST) lie on the Cytoplasmic side of the membrane. A helical transmembrane segment spans residues 246–266 (FIGTFLVCFAPYVITRLVELF). The Extracellular segment spans residues 267-276 (STAPIGSHWG). A helical membrane pass occupies residues 277 to 297 (VLSKCLAYSKAASDPFVYSLL). The Cytoplasmic portion of the chain corresponds to 298 to 337 (RHQYRRSCKELLNRIFNRRSLHSVGLTGDSHSQNILPVSE).

The protein belongs to the G-protein coupled receptor 1 family. Exclusively expressed in the brain. Prominent expression is detected throughout the entire neocortex at all rostrocaudal and dorsoventral levels. Strong expression is detected in olfactory and auditory sensory areas.

The protein localises to the cell membrane. In terms of biological role, orphan receptor. Displays a significant level of constitutive activity. Its effect is mediated by G(s)-alpha protein that stimulate adenylate cyclase, resulting in an elevation of intracellular cAMP. The polypeptide is G-protein coupled receptor 26 (Gpr26) (Mus musculus (Mouse)).